Consider the following 335-residue polypeptide: GTPase Obg (335 aa).

The Obg domain occupies 1–159 (MKFVDSAKIS…YELEMELKLM (159 aa)). One can recognise an OBG-type G domain in the interval 160 to 323 (ADVGLVGFPN…LKDELWRQVS (164 aa)). GTP is bound by residues 166 to 173 (GFPNAGKS), 191 to 195 (FTTLV), 213 to 216 (DIPG), 280 to 283 (TKMD), and 304 to 306 (SSV). Residues serine 173 and threonine 193 each contribute to the Mg(2+) site.

The protein belongs to the TRAFAC class OBG-HflX-like GTPase superfamily. OBG GTPase family. Monomer. Mg(2+) is required as a cofactor.

It localises to the cytoplasm. An essential GTPase which binds GTP, GDP and possibly (p)ppGpp with moderate affinity, with high nucleotide exchange rates and a fairly low GTP hydrolysis rate. Plays a role in control of the cell cycle, stress response, ribosome biogenesis and in those bacteria that undergo differentiation, in morphogenesis control. This Chlorobaculum tepidum (strain ATCC 49652 / DSM 12025 / NBRC 103806 / TLS) (Chlorobium tepidum) protein is GTPase Obg.